The chain runs to 279 residues: Four and a half LIM domains protein 2 (279 aa).

The segment at 7–31 (CHHCNESLYGKKYILKEENPHCVAC) adopts a C4-type zinc-finger fold. LIM zinc-binding domains follow at residues 40–92 (CEEC…CTDC), 101–153 (CQEC…CVPC), and 162–212 (CVQC…CLTC). A Glycyl lysine isopeptide (Lys-Gly) (interchain with G-Cter in SUMO2) cross-link involves residue Lys78. Residues Lys167 and Lys220 each participate in a glycyl lysine isopeptide (Lys-Gly) (interchain with G-Cter in SUMO2) cross-link. The LIM zinc-binding 4 domain occupies 221–275 (CAGCTNPISGLGGTKYISFEERQWHNDCFNCKKCSLSLVGRGFLTERDDILCPDC). Phosphoserine is present on Ser238.

As to quaternary structure, interacts with ZNF638 and TTN/titin. Interacts with E4F1. Interacts with GRB7. Interacts with SIRT1 and FOXO1. Interacts with CEFIP. Interacts with calcineurin. Interacts with FOXK1. Highly expressed in heart but also detectable in brain and skeletal muscle.

Its subcellular location is the cytoplasm. It localises to the nucleus. The protein resides in the myofibril. It is found in the sarcomere. The protein localises to the z line. Functionally, may function as a molecular transmitter linking various signaling pathways to transcriptional regulation. Negatively regulates the transcriptional repressor E4F1 and may function in cell growth. Inhibits the transcriptional activity of FOXO1 and its apoptotic function by enhancing the interaction of FOXO1 with SIRT1 and FOXO1 deacetylation. Negatively regulates the calcineurin/NFAT signaling pathway in cardiomyocytes. This is Four and a half LIM domains protein 2 (Fhl2) from Mus musculus (Mouse).